The chain runs to 195 residues: Protein GrpE (195 aa).

This sequence belongs to the GrpE family. As to quaternary structure, homodimer.

Its subcellular location is the cytoplasm. Its function is as follows. Participates actively in the response to hyperosmotic and heat shock by preventing the aggregation of stress-denatured proteins, in association with DnaK and GrpE. It is the nucleotide exchange factor for DnaK and may function as a thermosensor. Unfolded proteins bind initially to DnaJ; upon interaction with the DnaJ-bound protein, DnaK hydrolyzes its bound ATP, resulting in the formation of a stable complex. GrpE releases ADP from DnaK; ATP binding to DnaK triggers the release of the substrate protein, thus completing the reaction cycle. Several rounds of ATP-dependent interactions between DnaJ, DnaK and GrpE are required for fully efficient folding. In Francisella tularensis subsp. holarctica (strain FTNF002-00 / FTA), this protein is Protein GrpE.